Here is a 319-residue protein sequence, read N- to C-terminus: Taste receptor type 2 member 39 (319 aa).

At 1–16 the chain is on the extracellular side; sequence MAQPSNYWKQDVLPLS. A helical membrane pass occupies residues 17 to 37; sequence ILMLTLVATECTIGIIASGIV. At 38 to 65 the chain is on the cytoplasmic side; sequence MAVNAVSWVQKKAISITTRILLLLSVSR. Residues 66 to 86 traverse the membrane as a helical segment; that stretch reads IGLQSIMLIEITSSIFNVAFY. Topologically, residues 87–97 are extracellular; it reads NSVLYRVSNVS. Asparagine 95 is a glycosylation site (N-linked (GlcNAc...) asparagine). The helical transmembrane segment at 98–118 threads the bilayer; it reads FVFLNYCSLWFAALLSFFHFV. At 119-137 the chain is on the cytoplasmic side; the sequence is KIANFSYPLFFKLKWRISE. The chain crosses the membrane as a helical span at residues 138 to 158; the sequence is LMPWLLWLSVFISFSSSMFFS. The Extracellular portion of the chain corresponds to 159–194; that stretch reads KHKFTVNNNNSLSNNICNFTMKLYVVETNVVNVSFL. N-linked (GlcNAc...) asparagine glycosylation is found at asparagine 167, asparagine 176, and asparagine 190. A helical transmembrane segment spans residues 195–215; the sequence is FISGILPPLTMFVATATLLIF. Residues 216–247 lie on the Cytoplasmic side of the membrane; it reads SLRRHTLNMRNSATGSRNPCIEAHMQAIKETS. The chain crosses the membrane as a helical span at residues 248–268; the sequence is CFLFLYILNAAALLLSTSNIV. Residues 269-273 lie on the Extracellular side of the membrane; that stretch reads DASLF. The chain crosses the membrane as a helical span at residues 274 to 294; the sequence is WSIVIRIVLPVYPAGHSVLLI. Residues 295 to 319 are Cytoplasmic-facing; the sequence is QNNPGLRRTWKHLQSQIHLYLQNRF.

It belongs to the G-protein coupled receptor T2R family.

It is found in the membrane. Functionally, putative taste receptor which may play a role in the perception of bitterness. The chain is Taste receptor type 2 member 39 (Tas2r39) from Mus musculus (Mouse).